The chain runs to 148 residues: Arginine repressor (148 aa).

It belongs to the ArgR family.

It is found in the cytoplasm. Its pathway is amino-acid biosynthesis; L-arginine biosynthesis [regulation]. Functionally, regulates arginine biosynthesis genes. The sequence is that of Arginine repressor from Acidobacterium capsulatum (strain ATCC 51196 / DSM 11244 / BCRC 80197 / JCM 7670 / NBRC 15755 / NCIMB 13165 / 161).